A 216-amino-acid chain; its full sequence is GTP-binding nuclear protein Ran, testis-specific isoform (216 aa).

An N-acetylalanine modification is found at Ala2. The 165-residue stretch at 7 to 171 folds into the Small GTPase Ran-type domain; sequence PQVQFKVVLV…FWLARKLIGD (165 aa). 17–24 provides a ligand contact to GTP; sequence GDGGTGKT. The residue at position 24 (Thr24) is a Phosphothreonine. Residues 37–45 are switch-I; that stretch reads KEYVATLGV. Lys60 bears the N6-acetyllysine mark. 65 to 69 contacts GTP; the sequence is DTAGQ. Residues 68–84 are switch-II; that stretch reads GQEKFGGLRDGYYIQAQ. The residue at position 71 (Lys71) is an N6-acetyllysine; alternate. A Glycyl lysine isopeptide (Lys-Gly) (interchain with G-Cter in SUMO2); alternate cross-link involves residue Lys71. Lys71 is covalently cross-linked (Glycyl lysine isopeptide (Lys-Gly) (interchain with G-Cter in ubiquitin); alternate). Lys99 carries the N6-acetyllysine modification. GTP is bound at residue 122-125; it reads NKVD. The residue at position 134 (Lys134) is an N6-acetyllysine. Lys159 is subject to N6-acetyllysine; alternate. An N6-succinyllysine; alternate modification is found at Lys159.

It belongs to the small GTPase superfamily. Ran family. In terms of tissue distribution, testis specific.

It localises to the nucleus. It carries out the reaction GTP + H2O = GDP + phosphate + H(+). Functionally, GTP-binding protein involved in nucleocytoplasmic transport. Required for the import of protein into the nucleus and also for RNA export. Involved in chromatin condensation and control of cell cycle. In Mus musculus (Mouse), this protein is GTP-binding nuclear protein Ran, testis-specific isoform (Rasl2-9).